We begin with the raw amino-acid sequence, 641 residues long: Putative ABC transporter ATP-binding protein MA_0870 (641 aa).

The 241-residue stretch at 10 to 250 folds into the ABC transporter 1 domain; sequence IEIKDLWYTY…IEVFHRLGLR (241 aa). 44–51 lines the ATP pocket; that stretch reads GPTGCGKS. The disordered stretch occupies residues 286–332; it reads VKTPRNFSNPEEETGRRTDPAERNEFVNTGSGNIKYGDNRSENKGSE. 2 stretches are compositionally biased toward basic and acidic residues: residues 298 to 310 and 322 to 332; these read ETGR…ERNE and GDNRSENKGSE. Positions 338 to 566 constitute an ABC transporter 2 domain; that stretch reads ISIRDLWSGY…IEILKQASLT (229 aa). 371 to 378 contributes to the ATP binding site; it reads GTNGSGKS.

Belongs to the ABC transporter superfamily.

The protein resides in the cell membrane. In terms of biological role, probably part of an ABC transporter complex. Responsible for energy coupling to the transport system. The sequence is that of Putative ABC transporter ATP-binding protein MA_0870 from Methanosarcina acetivorans (strain ATCC 35395 / DSM 2834 / JCM 12185 / C2A).